Here is a 264-residue protein sequence, read N- to C-terminus: Thymidylate synthase (264 aa).

Arginine 21 contacts dUMP. Residue histidine 51 participates in (6R)-5,10-methylene-5,6,7,8-tetrahydrofolate binding. Residue 126–127 (RR) participates in dUMP binding. Cysteine 146 (nucleophile) is an active-site residue. Residues 166–169 (RSVD), asparagine 177, and 207–209 (HLY) contribute to the dUMP site. Aspartate 169 serves as a coordination point for (6R)-5,10-methylene-5,6,7,8-tetrahydrofolate. A (6R)-5,10-methylene-5,6,7,8-tetrahydrofolate-binding site is contributed by alanine 263.

It belongs to the thymidylate synthase family. Bacterial-type ThyA subfamily. As to quaternary structure, homodimer.

The protein resides in the cytoplasm. The catalysed reaction is dUMP + (6R)-5,10-methylene-5,6,7,8-tetrahydrofolate = 7,8-dihydrofolate + dTMP. It functions in the pathway pyrimidine metabolism; dTTP biosynthesis. Functionally, catalyzes the reductive methylation of 2'-deoxyuridine-5'-monophosphate (dUMP) to 2'-deoxythymidine-5'-monophosphate (dTMP) while utilizing 5,10-methylenetetrahydrofolate (mTHF) as the methyl donor and reductant in the reaction, yielding dihydrofolate (DHF) as a by-product. This enzymatic reaction provides an intracellular de novo source of dTMP, an essential precursor for DNA biosynthesis. The protein is Thymidylate synthase of Geobacillus kaustophilus (strain HTA426).